The chain runs to 85 residues: MAHKKGVGSSRNGRDSDGQRLGCKKFGGEHVKAGNIIYRQHGTKIHPGNNVGLGKDYTLFALIEGVVKFERLGRDRKKVSVYPAS.

The disordered stretch occupies residues 1–24 (MAHKKGVGSSRNGRDSDGQRLGCK).

This sequence belongs to the bacterial ribosomal protein bL27 family.

The sequence is that of Large ribosomal subunit protein bL27 from Geotalea daltonii (strain DSM 22248 / JCM 15807 / FRC-32) (Geobacter daltonii).